A 546-amino-acid polypeptide reads, in one-letter code: Chaperonin GroEL (546 aa).

ATP-binding positions include 29-32 (TLGP), lysine 50, 86-90 (DGTTT), glycine 414, and aspartate 494. Residues 525–546 (KKESAAPAMPGHDGMGGMGGMM) are disordered. The span at 537 to 546 (DGMGGMGGMM) shows a compositional bias: gly residues.

Belongs to the chaperonin (HSP60) family. As to quaternary structure, forms a cylinder of 14 subunits composed of two heptameric rings stacked back-to-back. Interacts with the co-chaperonin GroES.

The protein localises to the cytoplasm. The enzyme catalyses ATP + H2O + a folded polypeptide = ADP + phosphate + an unfolded polypeptide.. Functionally, together with its co-chaperonin GroES, plays an essential role in assisting protein folding. The GroEL-GroES system forms a nano-cage that allows encapsulation of the non-native substrate proteins and provides a physical environment optimized to promote and accelerate protein folding. This is Chaperonin GroEL from Bdellovibrio bacteriovorus (strain ATCC 15356 / DSM 50701 / NCIMB 9529 / HD100).